Reading from the N-terminus, the 769-residue chain is Amino-acid acetyltransferase, mitochondrial (769 aa).

The tract at residues 150-172 is disordered; that stretch reads LKASPAKSGQEPTESPKESISAS. The segment covering 159–172 has biased composition (polar residues); sequence QEPTESPKESISAS. In terms of domain architecture, N-acetyltransferase spans 590-759; that stretch reads MQPRLGLNDP…YEAVCRSIQP (170 aa).

It belongs to the acetyltransferase family.

It localises to the mitochondrion. It carries out the reaction L-glutamate + acetyl-CoA = N-acetyl-L-glutamate + CoA + H(+). Its pathway is amino-acid biosynthesis; L-arginine biosynthesis; N(2)-acetyl-L-ornithine from L-glutamate: step 1/4. Its function is as follows. N-acetylglutamate synthase involved in arginine biosynthesis. This chain is Amino-acid acetyltransferase, mitochondrial (arg2), found in Penicillium rubens (strain ATCC 28089 / DSM 1075 / NRRL 1951 / Wisconsin 54-1255) (Penicillium chrysogenum).